The chain runs to 429 residues: Mannose-6-phosphate isomerase (429 aa).

An N-acetylserine modification is found at serine 2. Serine 107 is subject to Phosphoserine. The Zn(2+) site is built by glutamine 109, histidine 111, glutamate 136, and histidine 281. The active site involves arginine 300.

The protein belongs to the mannose-6-phosphate isomerase type 1 family. As to quaternary structure, monomer. It depends on Zn(2+) as a cofactor.

It localises to the cytoplasm. It carries out the reaction D-mannose 6-phosphate = D-fructose 6-phosphate. It functions in the pathway nucleotide-sugar biosynthesis; GDP-alpha-D-mannose biosynthesis; alpha-D-mannose 1-phosphate from D-fructose 6-phosphate: step 1/2. With respect to regulation, can be inhibited by an excess of zinc. Functionally, involved in the synthesis of the GDP-mannose and dolichol-phosphate-mannose required for a number of critical mannosyl transfer reactions. This is Mannose-6-phosphate isomerase (PMI40) from Saccharomyces cerevisiae (strain ATCC 204508 / S288c) (Baker's yeast).